We begin with the raw amino-acid sequence, 467 residues long: ATP synthase subunit beta (467 aa).

154-161 (GGAGVGKT) provides a ligand contact to ATP.

Belongs to the ATPase alpha/beta chains family. In terms of assembly, F-type ATPases have 2 components, CF(1) - the catalytic core - and CF(0) - the membrane proton channel. CF(1) has five subunits: alpha(3), beta(3), gamma(1), delta(1), epsilon(1). CF(0) has three main subunits: a(1), b(2) and c(9-12). The alpha and beta chains form an alternating ring which encloses part of the gamma chain. CF(1) is attached to CF(0) by a central stalk formed by the gamma and epsilon chains, while a peripheral stalk is formed by the delta and b chains.

It is found in the cell inner membrane. The enzyme catalyses ATP + H2O + 4 H(+)(in) = ADP + phosphate + 5 H(+)(out). Functionally, produces ATP from ADP in the presence of a proton gradient across the membrane. The catalytic sites are hosted primarily by the beta subunits. The polypeptide is ATP synthase subunit beta (Leptospira interrogans serogroup Icterohaemorrhagiae serovar copenhageni (strain Fiocruz L1-130)).